The primary structure comprises 92 residues: Small ribosomal subunit protein uS19c (92 aa).

Belongs to the universal ribosomal protein uS19 family.

It localises to the plastid. The protein resides in the chloroplast. Protein S19 forms a complex with S13 that binds strongly to the 16S ribosomal RNA. In Nandina domestica (Heavenly bamboo), this protein is Small ribosomal subunit protein uS19c.